Here is a 611-residue protein sequence, read N- to C-terminus: Pyrichalasin H cluster regulator pyiR (611 aa).

A DNA-binding region (zn(2)-C6 fungal-type) is located at residues 11–47; it reads CDRCRGHKLRCIRLDPGPNDTGALLPCKRCVKAGAEC. 6 disordered regions span residues 53–128, 169–192, 265–291, 401–427, 521–550, and 564–593; these read LSVK…LPPW, ALAAPPGSERSPHRTSRAPSDGTT, GGAGSQSLRDQQMQQHQRHGSASGRSS, AHEGSSTENSAHRRGRGASPTADAAPQ, RGGLGGSSRDESSTEGGDGGGAGSSASDER, and SWFTTTTRGGSGGSGPGEGTGDSNGGRTVE. Positions 59 to 69 are enriched in basic and acidic residues; sequence GDGHHSAHRAT. The segment covering 98-109 has biased composition (low complexity); it reads PTQPAPQRQTQR. Over residues 265-279 the composition is skewed to polar residues; sequence GGAGSQSLRDQQMQQ. A compositionally biased stretch (gly residues) spans 572 to 587; it reads GGSGGSGPGEGTGDSN.

Its subcellular location is the nucleus. Transcription factor that specifically regulates the expression of the gene cluster that mediates the biosynthesis of the mycotoxin pyrichalasin H, a tyrosine-derived cytochalasan that inhibits the growth of rice seedlings, but also inhibits lymphocyte capping and actin polymerization and alters cell morphology. Pyrichalasin H is indicated as the responsible agent for the genus-specific pathogenicity of M.grisea toward crabgrass. This chain is Pyrichalasin H cluster regulator pyiR, found in Pyricularia grisea (Crabgrass-specific blast fungus).